Reading from the N-terminus, the 346-residue chain is MSDAYKNAGVDIEAGYEAVKRMKKHVERTQRLGVMGSLGGFGGMFDLSELPYQKPVLISGTDGVGTKLKLAFSMDKHDTIGVDAVAMCVNDVLAQGAEPLFFLDYLAVGKADPVKIEQIVQGVADGCEQSGSALIGGETAEMPGLYTADEYDIAGFSVGVAEKDEIVTGEHIEEGHLLIGLTSSGLHSNGFSLVRKVLLDDGGLDLDTVYEPFARPLGEELLEPTRIYVKPVLKAVKSGKVDGMAHVTGGGFIENIPRMLPDGLSAEIDHGSWPIPPIFPFLQEHGKLKEEEMFNVFNMGIGFVLAVKEEDLTGVIDTLEAQGEKAYLIGRVKRGEGISFGGAALS.

The protein belongs to the AIR synthase family.

It localises to the cytoplasm. It catalyses the reaction 2-formamido-N(1)-(5-O-phospho-beta-D-ribosyl)acetamidine + ATP = 5-amino-1-(5-phospho-beta-D-ribosyl)imidazole + ADP + phosphate + H(+). Its pathway is purine metabolism; IMP biosynthesis via de novo pathway; 5-amino-1-(5-phospho-D-ribosyl)imidazole from N(2)-formyl-N(1)-(5-phospho-D-ribosyl)glycinamide: step 2/2. The polypeptide is Phosphoribosylformylglycinamidine cyclo-ligase (Bacillus velezensis (strain DSM 23117 / BGSC 10A6 / LMG 26770 / FZB42) (Bacillus amyloliquefaciens subsp. plantarum)).